The primary structure comprises 359 residues: Peptide chain release factor 1 (359 aa).

At Gln-235 the chain carries N5-methylglutamine. The disordered stretch occupies residues 283–309 (QKAESERSQARRSQVGSGDRSERIRTY).

The protein belongs to the prokaryotic/mitochondrial release factor family. Post-translationally, methylated by PrmC. Methylation increases the termination efficiency of RF1.

It is found in the cytoplasm. Its function is as follows. Peptide chain release factor 1 directs the termination of translation in response to the peptide chain termination codons UAG and UAA. This Brucella canis (strain ATCC 23365 / NCTC 10854 / RM-666) protein is Peptide chain release factor 1.